A 760-amino-acid chain; its full sequence is Serine/threonine-protein kinase PknG (760 aa).

The tract at residues 1 to 31 is disordered; it reads MTSPENPDLPDADDAYVDSGPGTQPASLEDL. The Protein kinase domain maps to 161-403; sequence YEIKGCIAHG…SAEEMSSQLL (243 aa). Residues 167-175 and K191 contribute to the ATP site; that span reads IAHGGLGWV. D286 (proton acceptor) is an active-site residue.

It belongs to the protein kinase superfamily. Ser/Thr protein kinase family. As to quaternary structure, interacts with GarA in vitro.

It carries out the reaction L-seryl-[protein] + ATP = O-phospho-L-seryl-[protein] + ADP + H(+). It catalyses the reaction L-threonyl-[protein] + ATP = O-phospho-L-threonyl-[protein] + ADP + H(+). The sequence is that of Serine/threonine-protein kinase PknG (pknG) from Mycolicibacterium smegmatis (strain ATCC 700084 / mc(2)155) (Mycobacterium smegmatis).